The following is a 66-amino-acid chain: Toxin Tppa1 (66 aa).

In terms of domain architecture, LCN-type CS-alpha/beta spans 1–63 (KDGYLVGNDG…TWSRSTNRCG (63 aa)). 4 disulfide bridges follow: Cys-11-Cys-62, Cys-15-Cys-37, Cys-23-Cys-43, and Cys-27-Cys-45.

Belongs to the long (4 C-C) scorpion toxin superfamily. Sodium channel inhibitor family. Beta subfamily. Expressed by the venom gland.

The protein localises to the secreted. In terms of biological role, beta toxins bind voltage-independently at site-4 of sodium channels (Nav) and shift the voltage of activation toward more negative potentials thereby affecting sodium channel activation and promoting spontaneous and repetitive firing. This is Toxin Tppa1 from Tityus pachyurus (Colombian scorpion).